Here is a 426-residue protein sequence, read N- to C-terminus: UDP-N-acetylglucosamine 1-carboxyvinyltransferase 2 (426 aa).

Residue 22-23 (KN) participates in phosphoenolpyruvate binding. Residue arginine 92 participates in UDP-N-acetyl-alpha-D-glucosamine binding. Residue aspartate 116 is the Proton donor of the active site. UDP-N-acetyl-alpha-D-glucosamine is bound by residues 121–125 (RPIDQ), aspartate 307, and isoleucine 329.

It belongs to the EPSP synthase family. MurA subfamily.

The protein localises to the cytoplasm. The catalysed reaction is phosphoenolpyruvate + UDP-N-acetyl-alpha-D-glucosamine = UDP-N-acetyl-3-O-(1-carboxyvinyl)-alpha-D-glucosamine + phosphate. The protein operates within cell wall biogenesis; peptidoglycan biosynthesis. Functionally, cell wall formation. Adds enolpyruvyl to UDP-N-acetylglucosamine. The chain is UDP-N-acetylglucosamine 1-carboxyvinyltransferase 2 from Lactiplantibacillus plantarum (strain ATCC BAA-793 / NCIMB 8826 / WCFS1) (Lactobacillus plantarum).